Reading from the N-terminus, the 272-residue chain is Methylsterol monooxygenase 2-1 (272 aa).

3 consecutive transmembrane segments (helical) span residues 24–44 (IGSF…YIFL), 72–94 (LLLY…FRFM), and 107–127 (VVSA…YWGH). Positions 113–259 (LFYFIIEDFV…FVYMDWIFGT (147 aa)) constitute a Fatty acid hydroxylase domain. Residues 127–131 (HRILH) carry the Histidine box-1 motif. The short motif at 140-144 (HSVHH) is the Histidine box-2 element. Helical transmembrane passes span 162-182 (ILFL…HLIT) and 209-229 (NFLP…AYSA). A Histidine box-3 motif is present at residues 231-237 (FHDYHHR).

The protein belongs to the sterol desaturase family. Fe cation serves as cofactor. As to expression, strongly expressed in leaves, flowers, siliques and developing seeds.

The protein resides in the endoplasmic reticulum membrane. The enzyme catalyses 4,4-dimethyl-5alpha-cholest-7-en-3beta-ol + 6 Fe(II)-[cytochrome b5] + 3 O2 + 5 H(+) = 4alpha-carboxy-4beta-methyl-5alpha-cholest-7-ene-3beta-ol + 6 Fe(III)-[cytochrome b5] + 4 H2O. It catalyses the reaction 24-methylidenelophenol + 6 Fe(II)-[cytochrome b5] + 3 O2 + 5 H(+) = 4alpha-carboxy-ergosta-7,24(24(1))-dien-3beta-ol + 6 Fe(III)-[cytochrome b5] + 4 H2O. Non-heme iron oxygenase involved in sterols biosynthesis by catalyzing the removal of the second methyl group at the C-4 position. 24-ethylidenelophenol and 24-ethyllophenol are the preferred substrates. Together with SMO2-2, required during embryogenesis, probably by maintaining sterols and auxin homeostasis. The chain is Methylsterol monooxygenase 2-1 from Arabidopsis thaliana (Mouse-ear cress).